Reading from the N-terminus, the 333-residue chain is Global transcription regulator sge1 (333 aa).

2 disordered regions span residues 93–139 (PPGE…PSVP) and 241–307 (QHQS…PQYQ).

The protein belongs to the MIT1/WOR1 family.

Its subcellular location is the nucleus. Functionally, global transcriptional regulator that acts as an activator of secondary metabolism. Required for expression of a yet uncharacterized secondary metabolism gene cluster containing a non-canonical non-ribosomal peptide synthetase. Not required for conidiogenesis nor for pathogenicity, but is involved in vegetative growth. This is Global transcription regulator sge1 from Gibberella fujikuroi (strain CBS 195.34 / IMI 58289 / NRRL A-6831) (Bakanae and foot rot disease fungus).